The following is a 167-amino-acid chain: MINVEIVRNYNKWREYKQINKSLIKKITQNILLRFDNFSKIKQFELSILLTNAAEILTLNKQFRNIEKATNVLSFPSNELNWQDLYSKLEFLDDSDYMHLGDIAFCYEVIYNESCEQHKTFENHFIHLLIHSILHLIGFDHQNDTEANIMENLEIEILSYFGIFPPY.

Zn(2+) contacts are provided by H131, H135, and H141.

The protein belongs to the endoribonuclease YbeY family. Zn(2+) is required as a cofactor.

The protein resides in the cytoplasm. In terms of biological role, single strand-specific metallo-endoribonuclease involved in late-stage 70S ribosome quality control and in maturation of the 3' terminus of the 16S rRNA. This chain is Endoribonuclease YbeY, found in Rickettsia africae (strain ESF-5).